Here is a 304-residue protein sequence, read N- to C-terminus: MAEQDLLKTLGQLITEQRNPNSMQIDTLSAYEIVQIINNEDKQVPLAIEKVLPQIAQAVEKIVEAFQQGGRLVYIGAGTSGRLGVLDASECPPTFGVSPEMVKGIIAGGERALRHPIEGAEDNKEAGKQDLQAVEFSPKDVLVGIAASGRTPYVLGALAYAKELGAITVSIASNPNSAMSQIADIVIDTVVGAEVLTGSSRMKSGTAQKLVLNMLTTASMILIGKCYQNLMVDVQASNQKLVARAIRIVMQATECSREIAETTLALAENNAKLAIMMILADLDKDGAEQLLSQQQGKISRYTIV.

The region spanning 62-225 (IVEAFQQGGR…TTASMILIGK (164 aa)) is the SIS domain. The active-site Proton donor is the glutamate 90. Residue glutamate 121 is part of the active site.

This sequence belongs to the GCKR-like family. MurNAc-6-P etherase subfamily. As to quaternary structure, homodimer.

It catalyses the reaction N-acetyl-D-muramate 6-phosphate + H2O = N-acetyl-D-glucosamine 6-phosphate + (R)-lactate. It participates in amino-sugar metabolism; 1,6-anhydro-N-acetylmuramate degradation. Its pathway is amino-sugar metabolism; N-acetylmuramate degradation. It functions in the pathway cell wall biogenesis; peptidoglycan recycling. Its function is as follows. Specifically catalyzes the cleavage of the D-lactyl ether substituent of MurNAc 6-phosphate, producing GlcNAc 6-phosphate and D-lactate. Together with AnmK, is also required for the utilization of anhydro-N-acetylmuramic acid (anhMurNAc) either imported from the medium or derived from its own cell wall murein, and thus plays a role in cell wall recycling. The polypeptide is N-acetylmuramic acid 6-phosphate etherase (Glaesserella parasuis serovar 5 (strain SH0165) (Haemophilus parasuis)).